Reading from the N-terminus, the 240-residue chain is Cysteine-rich venom protein (240 aa).

Residues 1–19 form the signal peptide; the sequence is MIAFIVLPILAAVLQQSSG. The 128-residue stretch at 39–166 folds into the SCP domain; the sequence is DLHNSLRRSV…EYSYFYVCQY (128 aa). Disulfide bonds link cysteine 75-cysteine 153, cysteine 92-cysteine 167, cysteine 148-cysteine 164, cysteine 186-cysteine 193, cysteine 189-cysteine 198, cysteine 202-cysteine 235, cysteine 211-cysteine 229, and cysteine 220-cysteine 233. In terms of domain architecture, ShKT spans 202–235; that stretch reads CRQENKFTNCDSLVRQSSCQDNYMKTNCPASCFC.

This sequence belongs to the CRISP family. Expressed by the venom gland.

It is found in the secreted. Its function is as follows. Blocks contraction of smooth muscle elicited by high potassium-induced depolarization, but does not block caffeine-stimulated contraction. May target voltage-gated calcium channels on smooth muscle. This chain is Cysteine-rich venom protein, found in Protobothrops jerdonii (Jerdon's pitviper).